The primary structure comprises 482 residues: ATP synthase subunit beta (482 aa).

162 to 169 lines the ATP pocket; the sequence is GGAGVGKT.

It belongs to the ATPase alpha/beta chains family. In terms of assembly, F-type ATPases have 2 components, CF(1) - the catalytic core - and CF(0) - the membrane proton channel. CF(1) has five subunits: alpha(3), beta(3), gamma(1), delta(1), epsilon(1). CF(0) has four main subunits: a(1), b(1), b'(1) and c(9-12).

The protein resides in the cellular thylakoid membrane. The enzyme catalyses ATP + H2O + 4 H(+)(in) = ADP + phosphate + 5 H(+)(out). In terms of biological role, produces ATP from ADP in the presence of a proton gradient across the membrane. The catalytic sites are hosted primarily by the beta subunits. This is ATP synthase subunit beta from Nostoc punctiforme (strain ATCC 29133 / PCC 73102).